A 137-amino-acid polypeptide reads, in one-letter code: Recombination protein uvsY (137 aa).

In terms of assembly, homohexamer. Interacts with gp32.

Its function is as follows. Plays a role in viral DNA synthesis by promoting enzymatic activities of UvsX recombinase, by promoting UvsX-ssDNA filament assembly, and by helping UvsX to displace bound gp32 from ssDNA. The chain is Recombination protein uvsY (uvsY) from Escherichia coli (Bacteriophage T4).